A 394-amino-acid chain; its full sequence is Na(+)/H(+) antiporter NhaA (394 aa).

A run of 11 helical transmembrane segments spans residues 24–44 (AGLV…SPLA), 58–78 (LSVQ…LVGL), 96–116 (TLPG…YVML), 126–146 (GWAI…SLLG), 155–175 (IFLA…IAIF), 180–200 (INVA…SLCA), 214–234 (AVLW…GVLL), 267–287 (VAFA…FASI), 300–320 (VAAG…ALMV), 336–356 (VLGV…IGLL), and 370–390 (GILA…RIAG).

Belongs to the NhaA Na(+)/H(+) (TC 2.A.33) antiporter family.

It is found in the cell inner membrane. The enzyme catalyses Na(+)(in) + 2 H(+)(out) = Na(+)(out) + 2 H(+)(in). In terms of biological role, na(+)/H(+) antiporter that extrudes sodium in exchange for external protons. This chain is Na(+)/H(+) antiporter NhaA, found in Azorhizobium caulinodans (strain ATCC 43989 / DSM 5975 / JCM 20966 / LMG 6465 / NBRC 14845 / NCIMB 13405 / ORS 571).